We begin with the raw amino-acid sequence, 119 residues long: Small ribosomal subunit protein uS13 (119 aa).

The disordered stretch occupies residues 93-119 (RRGLPLRGQRTRSNARTRKGKRKPIRS).

This sequence belongs to the universal ribosomal protein uS13 family. In terms of assembly, part of the 30S ribosomal subunit. Forms a loose heterodimer with protein S19. Forms two bridges to the 50S subunit in the 70S ribosome.

Functionally, located at the top of the head of the 30S subunit, it contacts several helices of the 16S rRNA. In the 70S ribosome it contacts the 23S rRNA (bridge B1a) and protein L5 of the 50S subunit (bridge B1b), connecting the 2 subunits; these bridges are implicated in subunit movement. Contacts the tRNAs in the A and P-sites. The chain is Small ribosomal subunit protein uS13 from Coxiella burnetii (strain RSA 493 / Nine Mile phase I).